Reading from the N-terminus, the 319-residue chain is Lambda-crystallin homolog (319 aa).

A2 is modified (N-acetylalanine). S3 carries the phosphoserine modification. NAD(+)-binding positions include V16 to I17, D36, E97, and K102. A Phosphoserine modification is found at S111.

It belongs to the 3-hydroxyacyl-CoA dehydrogenase family. In terms of assembly, homodimer. In terms of tissue distribution, widely expressed, with highest levels in liver and kidney.

It is found in the cytoplasm. It catalyses the reaction L-gulonate + NAD(+) = 3-dehydro-L-gulonate + NADH + H(+). Its activity is regulated as follows. Inhibited by malonate. In terms of biological role, has high L-gulonate 3-dehydrogenase activity. It also exhibits low dehydrogenase activity toward L-3-hydroxybutyrate (HBA) and L-threonate. The polypeptide is Lambda-crystallin homolog (CRYL1) (Homo sapiens (Human)).